A 281-amino-acid polypeptide reads, in one-letter code: Phosphatidylglycerol--prolipoprotein diacylglyceryl transferase (281 aa).

4 consecutive transmembrane segments (helical) span residues 23-43, 71-91, 107-127, and 133-153; these read IGPL…LFAW, FVIW…VLFY, WDGG…MILF, and ILVW…LGVV. Residue Arg154 coordinates a 1,2-diacyl-sn-glycero-3-phospho-(1'-sn-glycerol). 3 helical membrane-spanning segments follow: residues 189 to 209, 217 to 237, and 247 to 267; these read LYEA…LVWG, GFVA…VEFF, and LFGG…LLGL.

The protein belongs to the Lgt family.

It is found in the cell inner membrane. The enzyme catalyses L-cysteinyl-[prolipoprotein] + a 1,2-diacyl-sn-glycero-3-phospho-(1'-sn-glycerol) = an S-1,2-diacyl-sn-glyceryl-L-cysteinyl-[prolipoprotein] + sn-glycerol 1-phosphate + H(+). The protein operates within protein modification; lipoprotein biosynthesis (diacylglyceryl transfer). In terms of biological role, catalyzes the transfer of the diacylglyceryl group from phosphatidylglycerol to the sulfhydryl group of the N-terminal cysteine of a prolipoprotein, the first step in the formation of mature lipoproteins. The protein is Phosphatidylglycerol--prolipoprotein diacylglyceryl transferase of Brucella canis (strain ATCC 23365 / NCTC 10854 / RM-666).